We begin with the raw amino-acid sequence, 234 residues long: N-acetyl-alpha-D-glucosaminyl L-malate deacetylase 1 (234 aa).

Zn(2+) is bound by residues His-12, Asp-15, and His-113.

This sequence belongs to the PIGL family. Homohexamer. Trimer of dimers. The cofactor is Zn(2+).

It carries out the reaction (S)-malyl N-acetyl-alpha-D-glucosaminide + H2O = (S)-malyl alpha-D-glucosaminide + acetate. Its function is as follows. Involved in bacillithiol (BSH) biosynthesis. Catalyzes the second step of the pathway, the deacetylation of N-acetylglucosaminylmalate (GlcNAc-Mal) to glucosamine malate (GlcN-Mal). This Bacillus cereus (strain ATCC 14579 / DSM 31 / CCUG 7414 / JCM 2152 / NBRC 15305 / NCIMB 9373 / NCTC 2599 / NRRL B-3711) protein is N-acetyl-alpha-D-glucosaminyl L-malate deacetylase 1.